Reading from the N-terminus, the 38-residue chain is Large ribosomal subunit protein bL36 (38 aa).

Belongs to the bacterial ribosomal protein bL36 family.

The polypeptide is Large ribosomal subunit protein bL36 (Psychrobacter arcticus (strain DSM 17307 / VKM B-2377 / 273-4)).